We begin with the raw amino-acid sequence, 281 residues long: sn-glycerol-3-phosphate transport system permease protein UgpE (281 aa).

A run of 6 helical transmembrane segments spans residues 16–36 (LILGIAVILFPLYVAFVAATL), 85–105 (FSITLGKITVSMLSAFAIVWF), 113–133 (FFWMIFITLMLPVEVRIFPTV), 142–162 (LDSYAGLTLPLMASATATFLF), 202–222 (ALFVITFIYGWNQYLWPLLII), and 247–267 (WNSVMAAMLLTLIPPVVIVLV). The 192-residue stretch at 77 to 268 (LLNSFVMAFS…IPPVVIVLVM (192 aa)) folds into the ABC transmembrane type-1 domain.

The protein belongs to the binding-protein-dependent transport system permease family. UgpAE subfamily. As to quaternary structure, the complex is composed of two ATP-binding proteins (UgpC), two transmembrane proteins (UgpA and UgpE) and a solute-binding protein (UgpB).

The protein resides in the cell inner membrane. Functionally, part of the ABC transporter complex UgpBAEC involved in sn-glycerol-3-phosphate (G3P) import. Probably responsible for the translocation of the substrate across the membrane. The polypeptide is sn-glycerol-3-phosphate transport system permease protein UgpE (ugpE) (Shigella dysenteriae serotype 1 (strain Sd197)).